A 374-amino-acid chain; its full sequence is Ribosomal RNA large subunit methyltransferase G (374 aa).

Belongs to the methyltransferase superfamily. RlmG family.

The protein localises to the cytoplasm. The enzyme catalyses guanosine(1835) in 23S rRNA + S-adenosyl-L-methionine = N(2)-methylguanosine(1835) in 23S rRNA + S-adenosyl-L-homocysteine + H(+). Specifically methylates the guanine in position 1835 (m2G1835) of 23S rRNA. This Pseudomonas putida (strain GB-1) protein is Ribosomal RNA large subunit methyltransferase G.